A 384-amino-acid polypeptide reads, in one-letter code: Branched-chain-amino-acid aminotransferase 1, mitochondrial (384 aa).

The N-terminal 18 residues, 1-18 (MALRRCLPQYSTTSSYLS), are a transit peptide targeting the mitochondrion. The residue at position 231 (lysine 231) is an N6-(pyridoxal phosphate)lysine.

It belongs to the class-IV pyridoxal-phosphate-dependent aminotransferase family. Requires pyridoxal 5'-phosphate as cofactor.

It localises to the mitochondrion. The catalysed reaction is L-leucine + 2-oxoglutarate = 4-methyl-2-oxopentanoate + L-glutamate. It carries out the reaction L-isoleucine + 2-oxoglutarate = (S)-3-methyl-2-oxopentanoate + L-glutamate. The enzyme catalyses L-valine + 2-oxoglutarate = 3-methyl-2-oxobutanoate + L-glutamate. Its pathway is amino-acid degradation; L-leucine degradation; 4-methyl-2-oxopentanoate from L-leucine (aminotransferase route): step 1/1. It functions in the pathway amino-acid degradation; L-valine degradation. In terms of biological role, converts 2-oxo acids to branched-chain amino acids. Acts on leucine, isoleucine and valine. This Arabidopsis thaliana (Mouse-ear cress) protein is Branched-chain-amino-acid aminotransferase 1, mitochondrial (BCAT1).